A 334-amino-acid chain; its full sequence is ADP-L-glycero-D-manno-heptose-6-epimerase (334 aa).

NADP(+) is bound by residues 11-12 (FI), 32-33 (DN), K39, K54, 77-81 (QGACS), and N94. The active-site Proton acceptor is the Y141. K145 contacts NADP(+). N171 is a substrate binding site. NADP(+) contacts are provided by V172 and K180. The Proton acceptor role is filled by K180. Substrate contacts are provided by residues R182, H189, 203–206 (FGSN), R216, and Y295.

This sequence belongs to the NAD(P)-dependent epimerase/dehydratase family. HldD subfamily. In terms of assembly, homopentamer. NADP(+) is required as a cofactor.

It catalyses the reaction ADP-D-glycero-beta-D-manno-heptose = ADP-L-glycero-beta-D-manno-heptose. It participates in nucleotide-sugar biosynthesis; ADP-L-glycero-beta-D-manno-heptose biosynthesis; ADP-L-glycero-beta-D-manno-heptose from D-glycero-beta-D-manno-heptose 7-phosphate: step 4/4. Its pathway is bacterial outer membrane biogenesis; LOS core biosynthesis. Catalyzes the interconversion between ADP-D-glycero-beta-D-manno-heptose and ADP-L-glycero-beta-D-manno-heptose via an epimerization at carbon 6 of the heptose. This is ADP-L-glycero-D-manno-heptose-6-epimerase from Neisseria meningitidis serogroup B (strain ATCC BAA-335 / MC58).